A 262-amino-acid chain; its full sequence is Acyl-[acyl-carrier-protein]--UDP-N-acetylglucosamine O-acyltransferase (262 aa).

Belongs to the transferase hexapeptide repeat family. LpxA subfamily. Homotrimer.

The protein localises to the cytoplasm. The enzyme catalyses a (3R)-hydroxyacyl-[ACP] + UDP-N-acetyl-alpha-D-glucosamine = a UDP-3-O-[(3R)-3-hydroxyacyl]-N-acetyl-alpha-D-glucosamine + holo-[ACP]. The protein operates within glycolipid biosynthesis; lipid IV(A) biosynthesis; lipid IV(A) from (3R)-3-hydroxytetradecanoyl-[acyl-carrier-protein] and UDP-N-acetyl-alpha-D-glucosamine: step 1/6. Involved in the biosynthesis of lipid A, a phosphorylated glycolipid that anchors the lipopolysaccharide to the outer membrane of the cell. This Vibrio campbellii (strain ATCC BAA-1116) protein is Acyl-[acyl-carrier-protein]--UDP-N-acetylglucosamine O-acyltransferase.